The following is a 258-amino-acid chain: Small ribosomal subunit protein mS40 (258 aa).

The transit peptide at 1–35 directs the protein to the mitochondrion; it reads MAASILNVLLRRLPGVSPFRGAYGVQVLLQTLCTK. S49 carries the post-translational modification Phosphoserine. The tract at residues 223–258 is disordered; it reads RLREESGPPPELMPEVPLTAPAEASSTEPGAPQSAL.

It belongs to the bacterial ribosomal protein bS18 family. Mitochondrion-specific ribosomal protein mS40 subfamily. As to quaternary structure, component of the mitochondrial ribosome small subunit (28S) which comprises a 12S rRNA and about 30 distinct proteins.

It localises to the mitochondrion. This chain is Small ribosomal subunit protein mS40 (MRPS18B), found in Sus scrofa (Pig).